We begin with the raw amino-acid sequence, 57 residues long: uncharacterized protein (57 aa).

A helical membrane pass occupies residues 4–26 (FMPIRVFLYSYVIINSLLSSFFH).

The protein resides in the membrane. This is an uncharacterized protein from Saccharomyces cerevisiae (strain ATCC 204508 / S288c) (Baker's yeast).